A 219-amino-acid polypeptide reads, in one-letter code: Peptidyl-tRNA hydrolase (219 aa).

Tyr26 is a tRNA binding site. Catalysis depends on His31, which acts as the Proton acceptor. Residues Tyr78, Asn80, and Asn126 each contribute to the tRNA site.

Belongs to the PTH family. As to quaternary structure, monomer.

The protein localises to the cytoplasm. The catalysed reaction is an N-acyl-L-alpha-aminoacyl-tRNA + H2O = an N-acyl-L-amino acid + a tRNA + H(+). Hydrolyzes ribosome-free peptidyl-tRNAs (with 1 or more amino acids incorporated), which drop off the ribosome during protein synthesis, or as a result of ribosome stalling. Its function is as follows. Catalyzes the release of premature peptidyl moieties from peptidyl-tRNA molecules trapped in stalled 50S ribosomal subunits, and thus maintains levels of free tRNAs and 50S ribosomes. This is Peptidyl-tRNA hydrolase from Trichodesmium erythraeum (strain IMS101).